Here is a 258-residue protein sequence, read N- to C-terminus: Imidazole glycerol phosphate synthase subunit HisF (258 aa).

Active-site residues include D11 and D130.

It belongs to the HisA/HisF family. In terms of assembly, heterodimer of HisH and HisF.

It localises to the cytoplasm. It catalyses the reaction 5-[(5-phospho-1-deoxy-D-ribulos-1-ylimino)methylamino]-1-(5-phospho-beta-D-ribosyl)imidazole-4-carboxamide + L-glutamine = D-erythro-1-(imidazol-4-yl)glycerol 3-phosphate + 5-amino-1-(5-phospho-beta-D-ribosyl)imidazole-4-carboxamide + L-glutamate + H(+). The protein operates within amino-acid biosynthesis; L-histidine biosynthesis; L-histidine from 5-phospho-alpha-D-ribose 1-diphosphate: step 5/9. Its function is as follows. IGPS catalyzes the conversion of PRFAR and glutamine to IGP, AICAR and glutamate. The HisF subunit catalyzes the cyclization activity that produces IGP and AICAR from PRFAR using the ammonia provided by the HisH subunit. This is Imidazole glycerol phosphate synthase subunit HisF from Escherichia coli (strain ATCC 8739 / DSM 1576 / NBRC 3972 / NCIMB 8545 / WDCM 00012 / Crooks).